A 372-amino-acid polypeptide reads, in one-letter code: Queuine tRNA-ribosyltransferase (372 aa).

The Proton acceptor role is filled by Asp-89. Substrate-binding positions include 89-93 (DSGGF), Asp-161, and Gly-232. The tract at residues 262-268 (GIGDLPS) is RNA binding. Residue Asp-281 is the Nucleophile of the active site. The RNA binding; important for wobble base 34 recognition stretch occupies residues 286–290 (TKAAR). Residues Cys-319, Cys-321, Cys-324, and His-351 each contribute to the Zn(2+) site.

Belongs to the queuine tRNA-ribosyltransferase family. As to quaternary structure, homodimer. Within each dimer, one monomer is responsible for RNA recognition and catalysis, while the other monomer binds to the replacement base PreQ1. Zn(2+) serves as cofactor.

It carries out the reaction 7-aminomethyl-7-carbaguanine + guanosine(34) in tRNA = 7-aminomethyl-7-carbaguanosine(34) in tRNA + guanine. It functions in the pathway tRNA modification; tRNA-queuosine biosynthesis. Its function is as follows. Catalyzes the base-exchange of a guanine (G) residue with the queuine precursor 7-aminomethyl-7-deazaguanine (PreQ1) at position 34 (anticodon wobble position) in tRNAs with GU(N) anticodons (tRNA-Asp, -Asn, -His and -Tyr). Catalysis occurs through a double-displacement mechanism. The nucleophile active site attacks the C1' of nucleotide 34 to detach the guanine base from the RNA, forming a covalent enzyme-RNA intermediate. The proton acceptor active site deprotonates the incoming PreQ1, allowing a nucleophilic attack on the C1' of the ribose to form the product. After dissociation, two additional enzymatic reactions on the tRNA convert PreQ1 to queuine (Q), resulting in the hypermodified nucleoside queuosine (7-(((4,5-cis-dihydroxy-2-cyclopenten-1-yl)amino)methyl)-7-deazaguanosine). This Chlamydia abortus (strain DSM 27085 / S26/3) (Chlamydophila abortus) protein is Queuine tRNA-ribosyltransferase.